Here is a 31-residue protein sequence, read N- to C-terminus: Photosystem II reaction center protein T (31 aa).

Residues 3 to 23 (SVAYIIVLAMALSVLFFAIAF) traverse the membrane as a helical segment.

The protein belongs to the PsbT family. In terms of assembly, PSII is composed of 1 copy each of membrane proteins PsbA, PsbB, PsbC, PsbD, PsbE, PsbF, PsbH, PsbI, PsbJ, PsbK, PsbL, PsbM, PsbT, PsbX, PsbY, PsbZ, Psb30/Ycf12, peripheral proteins PsbO, CyanoQ (PsbQ), PsbU, PsbV and a large number of cofactors. It forms dimeric complexes.

The protein localises to the cellular thylakoid membrane. Functionally, found at the monomer-monomer interface of the photosystem II (PS II) dimer, plays a role in assembly and dimerization of PSII. PSII is a light-driven water plastoquinone oxidoreductase, using light energy to abstract electrons from H(2)O, generating a proton gradient subsequently used for ATP formation. The protein is Photosystem II reaction center protein T of Picosynechococcus sp. (strain ATCC 27264 / PCC 7002 / PR-6) (Agmenellum quadruplicatum).